A 78-amino-acid polypeptide reads, in one-letter code: DNA-directed RNA polymerase subunit omega (78 aa).

Belongs to the RNA polymerase subunit omega family. In cyanobacteria the RNAP catalytic core is composed of 2 alpha, 1 beta, 1 beta', 1 gamma and 1 omega subunit. When a sigma factor is associated with the core the holoenzyme is formed, which can initiate transcription.

The catalysed reaction is RNA(n) + a ribonucleoside 5'-triphosphate = RNA(n+1) + diphosphate. Promotes RNA polymerase assembly. Latches the N- and C-terminal regions of the beta' subunit thereby facilitating its interaction with the beta and alpha subunits. This chain is DNA-directed RNA polymerase subunit omega, found in Prochlorococcus marinus (strain MIT 9312).